A 109-amino-acid chain; its full sequence is MKDLGGLMKQAQAMQQKLADAQARLAETTVDGTSGGGMVTVTLMGNGELVRVLMDESLVQPGEGEVIADLIIAAHADAKKKLDAKQAQMMQDAAGPMAGLMGGLPGMKF.

This sequence belongs to the YbaB/EbfC family. Homodimer.

It localises to the cytoplasm. Its subcellular location is the nucleoid. Functionally, binds to DNA and alters its conformation. May be involved in regulation of gene expression, nucleoid organization and DNA protection. This Caulobacter vibrioides (strain ATCC 19089 / CIP 103742 / CB 15) (Caulobacter crescentus) protein is Nucleoid-associated protein CC_0268.